We begin with the raw amino-acid sequence, 74 residues long: Conotoxin ca17a (74 aa).

Residues 1–20 (MQKATVLLLALLLLLPLSTA) form the signal peptide. The propeptide occupies 21-40 (QDAEGSQEDAAQREVDIATR). 4-hydroxyproline is present on Pro51.

In terms of processing, contains disulfide bonds. In terms of tissue distribution, expressed by the venom gland.

It is found in the secreted. The chain is Conotoxin ca17a from Conus caracteristicus (Characteristic cone).